The primary structure comprises 172 residues: Small ribosomal subunit protein uS5 (172 aa).

The region spanning 17–80 is the S5 DRBM domain; sequence LREKMISVNR…DEARRKMVKV (64 aa).

Belongs to the universal ribosomal protein uS5 family. Part of the 30S ribosomal subunit. Contacts proteins S4 and S8.

In terms of biological role, with S4 and S12 plays an important role in translational accuracy. Located at the back of the 30S subunit body where it stabilizes the conformation of the head with respect to the body. The polypeptide is Small ribosomal subunit protein uS5 (Cupriavidus taiwanensis (strain DSM 17343 / BCRC 17206 / CCUG 44338 / CIP 107171 / LMG 19424 / R1) (Ralstonia taiwanensis (strain LMG 19424))).